Here is a 690-residue protein sequence, read N- to C-terminus: MGTVSSRRSWWPLPLLLLLLLGPAGARAQEDEDGDYEELVLALRSEEDGLAEAPEHGTTATFHRCAKDPWRLPGTYVVVLKEETHLSQSERTARRLQAQAARRGYLTKILHVFHGLLPGFLVKMSGDLLELALKLPHVDYIEEDSSVFAQSIPWNLERITPPRYRADEYQPPDGGSLVEVYLLDTSIQSDHREIEGRVMVTDFENVPEEDGTRFHRQASKCDSHGTHLAGVVSGRDAGVAKGASMRSLRVLNCQGKGTVSGTLIGLEFIRKSQLVQPVGPLVVLLPLAGGYSRVLNAACQRLARAGVVLVTAAGNFRDDACLYSPASAPEVITVGATNAQDQPVTLGTLGTNFGRCVDLFAPGEDIIGASSDCSTCFVSQSGTSQAAAHVAGIAAMMLSAEPELTLAELRQRLIHFSAKDVINEAWFPEDQRVLTPNLVAALPPSTHGAGWQLFCRTVWSAHSGPTRMATAVARCAPDEELLSCSSFSRSGKRRGEHMEAQGGKLVCRAHNAFGGEGVYAIARCCLLPQANCSVHTAPPAEAGMGTRVHCHQQGHVLTGCSSHWEVEDLGTHKPPVLRPRGQPNQCVGHREASIHASCCHAPGLECKVKEHGIPAPQEQVTVACEEGWTLTGCSALPGTSHVLGAYGIDNTCVVRSRDVSTTGRTSEEALAAVAICCRSRHLVQASQELQ.

Positions 1-28 are cleaved as a signal peptide; it reads MGTVSSRRSWWPLPLLLLLLLGPAGARA. Positions 29–150 are excised as a propeptide; that stretch reads QEDEDGDYEE…IEEDSSVFAQ (122 aa). The residue at position 36 (Tyr36) is a Sulfotyrosine. Residue Ser45 is modified to Phosphoserine. An Inhibitor I9 domain is found at 75–147; it reads TYVVVLKEET…VDYIEEDSSV (73 aa). In terms of domain architecture, Peptidase S8 spans 153–459; sequence PWNLERITPP…GWQLFCRTVW (307 aa). Residues Asp184 and His224 each act as charge relay system in the active site. Disulfide bonds link Cys221/Cys253 and Cys321/Cys356. Residue Ser384 is the Charge relay system of the active site. The interval 448-690 is C-terminal domain; sequence GAGWQLFCRT…HLVQASQELQ (243 aa). Cystine bridges form between Cys455-Cys525, Cys475-Cys524, and Cys484-Cys507. Asn531 carries N-linked (GlcNAc...) asparagine glycosylation. 6 disulfides stabilise this stretch: Cys532/Cys599, Cys550/Cys598, Cys560/Cys586, Cys606/Cys677, Cys624/Cys676, and Cys633/Cys652. Ser686 bears the Phosphoserine mark.

This sequence belongs to the peptidase S8 family. Monomer. Can self-associate to form dimers and higher multimers which may have increased LDLR degrading activity. The precursor protein but not the mature protein may form multimers. Interacts with APOB, VLDLR, LRP8/APOER2 and BACE1. The full-length immature form (pro-PCSK9) interacts with SCNN1A, SCNN1B and SCNN1G. The pro-PCSK9 form (via C-terminal domain) interacts with LDLR. Interacts (via the C-terminal domain) with ANXA2 (via repeat Annexin 1); the interaction inhibits the degradation of LDLR. Ca(2+) is required as a cofactor. Cleavage by furin and PCSK5 generates a truncated inactive protein that is unable to induce LDLR degradation. Post-translationally, undergoes autocatalytic cleavage in the endoplasmic reticulum to release the propeptide from the N-terminus and the cleavage of the propeptide is strictly required for its maturation and activation. The cleaved propeptide however remains associated with the catalytic domain through non-covalent interactions, preventing potential substrates from accessing its active site. As a result, it is secreted from cells as a propeptide-containing, enzymatically inactive protein. In terms of processing, phosphorylation protects the propeptide against proteolysis.

It is found in the cytoplasm. It localises to the secreted. The protein localises to the endosome. Its subcellular location is the lysosome. The protein resides in the cell surface. It is found in the endoplasmic reticulum. It localises to the golgi apparatus. With respect to regulation, its proteolytic activity is autoinhibited by the non-covalent binding of the propeptide to the catalytic domain. Inhibited by EGTA. Crucial player in the regulation of plasma cholesterol homeostasis. Binds to low-density lipid receptor family members: low density lipoprotein receptor (LDLR), very low density lipoprotein receptor (VLDLR), apolipoprotein E receptor (LRP1/APOER) and apolipoprotein receptor 2 (LRP8/APOER2), and promotes their degradation in intracellular acidic compartments. Acts via a non-proteolytic mechanism to enhance the degradation of the hepatic LDLR through a clathrin LDLRAP1/ARH-mediated pathway. May prevent the recycling of LDLR from endosomes to the cell surface or direct it to lysosomes for degradation. Can induce ubiquitination of LDLR leading to its subsequent degradation. Inhibits intracellular degradation of APOB via the autophagosome/lysosome pathway in a LDLR-independent manner. Involved in the disposal of non-acetylated intermediates of BACE1 in the early secretory pathway. Inhibits epithelial Na(+) channel (ENaC)-mediated Na(+) absorption by reducing ENaC surface expression primarily by increasing its proteasomal degradation. Regulates neuronal apoptosis via modulation of LRP8/APOER2 levels and related anti-apoptotic signaling pathways. The chain is Proprotein convertase subtilisin/kexin type 9 (PCSK9) from Gorilla gorilla gorilla (Western lowland gorilla).